Reading from the N-terminus, the 327-residue chain is uncharacterized protein (327 aa).

A disordered region spans residues 129–306 (TPLQNQEATT…DNKKTVTTSS (178 aa)). Residues 130–144 (PLQNQEATTSPTIES) are compositionally biased toward polar residues. Basic and acidic residues-rich tracts occupy residues 184–196 (KSVENKKGSDRNV) and 233–276 (TKDE…EKIV).

This is an uncharacterized protein from Caenorhabditis elegans.